The following is a 622-amino-acid chain: DNA polymerase II small subunit (622 aa).

Positions 76 to 113 (ISTGEGSQKVPDHEELEKITNESSVESSISTGETPKTE) are disordered. Basic and acidic residues predominate over residues 85 to 95 (VPDHEELEKIT). Positions 96–109 (NESSVESSISTGET) are enriched in polar residues.

This sequence belongs to the DNA polymerase delta/II small subunit family. Heterodimer of a large subunit and a small subunit.

The enzyme catalyses DNA(n) + a 2'-deoxyribonucleoside 5'-triphosphate = DNA(n+1) + diphosphate. The catalysed reaction is Exonucleolytic cleavage in the 3'- to 5'-direction to yield nucleoside 5'-phosphates.. Functionally, possesses two activities: a DNA synthesis (polymerase) and an exonucleolytic activity that degrades single-stranded DNA in the 3' to 5' direction. Has a template-primer preference which is characteristic of a replicative DNA polymerase. In Pyrococcus horikoshii (strain ATCC 700860 / DSM 12428 / JCM 9974 / NBRC 100139 / OT-3), this protein is DNA polymerase II small subunit (polB).